The primary structure comprises 51 residues: Large ribosomal subunit protein bL33 (51 aa).

The tract at residues 1–20 (MRDKIRLNSSAGTGHFYTTD) is disordered.

It belongs to the bacterial ribosomal protein bL33 family.

This is Large ribosomal subunit protein bL33 from Psychromonas ingrahamii (strain DSM 17664 / CCUG 51855 / 37).